Here is a 233-residue protein sequence, read N- to C-terminus: 2-C-methyl-D-erythritol 4-phosphate cytidylyltransferase (233 aa).

This sequence belongs to the IspD/TarI cytidylyltransferase family. IspD subfamily.

It catalyses the reaction 2-C-methyl-D-erythritol 4-phosphate + CTP + H(+) = 4-CDP-2-C-methyl-D-erythritol + diphosphate. It functions in the pathway isoprenoid biosynthesis; isopentenyl diphosphate biosynthesis via DXP pathway; isopentenyl diphosphate from 1-deoxy-D-xylulose 5-phosphate: step 2/6. Catalyzes the formation of 4-diphosphocytidyl-2-C-methyl-D-erythritol from CTP and 2-C-methyl-D-erythritol 4-phosphate (MEP). In Geotalea uraniireducens (strain Rf4) (Geobacter uraniireducens), this protein is 2-C-methyl-D-erythritol 4-phosphate cytidylyltransferase.